The following is a 282-amino-acid chain: Putative phosphatase in upp 3'region (282 aa).

Residue Asp17 is the Nucleophile of the active site. Asp17 lines the Mg(2+) pocket. Leu18 contacts phosphate. Asp19 is a Mg(2+) binding site. Phosphate is bound by residues 53 to 54 (TG) and Lys211. 2 residues coordinate Mg(2+): Asp234 and Ser235. Asn237 contacts phosphate.

The protein belongs to the HAD-like hydrolase superfamily. Cof family. The cofactor is Mg(2+).

The chain is Putative phosphatase in upp 3'region from Metamycoplasma hominis (Mycoplasma hominis).